The chain runs to 183 residues: Casparian strip membrane protein 2 (183 aa).

Residues 1-23 are Cytoplasmic-facing; that stretch reads MDSGEQGETSKAPLNKGVSRGVS. The helical transmembrane segment at 24-44 threads the bilayer; it reads ILDLILRVIAVISTLASAIAM. Topologically, residues 45–71 are extracellular; sequence GTTNETLPLFTPFIQFKARYSDLPALT. An N-linked (GlcNAc...) asparagine glycan is attached at asparagine 48. A helical membrane pass occupies residues 72–92; the sequence is FFVVANSIVSAYLILSLPLSI. Residues 93–104 are Cytoplasmic-facing; that stretch reads AHIIRSGAKYSR. A helical transmembrane segment spans residues 105 to 125; that stretch reads LVLIIFDAAMLALVTAASSAA. Residues 126–158 lie on the Extracellular side of the membrane; the sequence is TAIVYLAHKGNVRANWLAICQQLDSFCERTSGS. The chain crosses the membrane as a helical span at residues 159 to 179; the sequence is LVGSFGAMVLLILLILLSAMA. Topologically, residues 180 to 183 are cytoplasmic; it reads LARR.

Belongs to the Casparian strip membrane proteins (CASP) family. In terms of assembly, homodimer and heterodimers.

It is found in the cell membrane. Regulates membrane-cell wall junctions and localized cell wall deposition. Required for establishment of the Casparian strip membrane domain (CSD) and the subsequent formation of Casparian strips, a cell wall modification of the root endodermis that determines an apoplastic barrier between the intraorganismal apoplasm and the extraorganismal apoplasm and prevents lateral diffusion. In Triticum aestivum (Wheat), this protein is Casparian strip membrane protein 2.